Reading from the N-terminus, the 391-residue chain is Acridone synthase 2 (391 aa).

Cys164 is an active-site residue.

The protein belongs to the thiolase-like superfamily. Chalcone/stilbene synthases family. As to quaternary structure, homodimer.

It catalyses the reaction N-methylanthraniloyl-CoA + 3 malonyl-CoA + 3 H(+) = 1,3-dihydroxy-N-methylacridone + 3 CO2 + 4 CoA + H2O. This Ruta graveolens (Common rue) protein is Acridone synthase 2 (ACS2).